The chain runs to 547 residues: MTSSPATPSAVDDAPDWPAAFVRRYLDAGHWQDQNFAEALAASAARHPRRIALCDDDQRLSYADLLQRCRRLAAGLRQAGLAHGDTVVLHLPNGIAFVETCFALFQLGVRPVLALPAHRQHEISGFCRFAEAKAYIGAERIDGFDPRPMARELLASGACRMALIHGEAEAPLQALAPLYQADALEDCAARAEDIACFQLSGGTTGTPKLIPRRHREYLYNVRASAEVCGFDEHTVYLTGLPMAHNFTLCCPGVIGTLLAGGRVVVSQRADPEHCFALIARERVTHTALVPPLAMLWLDAQESRRADLSSLRLLQVGGSRLGSSAAQRVEPVLGCQLQQVLGMAEGLICYTRLDDPPERVLHTQGRPLSPDDEVRVVDAEGREVGPGEVGELTVRGPYTIRGYYRLPEHNAKAFSADGFYRTGDRVSRDKDGYLVVEGRDKDQINRGGEKIAAEEVENLLIAHPQVHDATVVAMPDSLLGERTCAFVIPRQPAPSALKLKQYLHACGLAAFKVPDRIELVPAFPQTGIGKISKKDLRERLRRELEARA.

This sequence belongs to the ATP-dependent AMP-binding enzyme family.

It catalyses the reaction salicylate + holo-[ACP] + ATP = salicyl-[ACP] + AMP + diphosphate. The protein operates within siderophore biosynthesis. Its pathway is antifungal biosynthesis. Involved in the biosynthesis of the siderophore pyochelin. Specifically adenylates salicylate and loads it onto the holo form of PchE via a thioester linkage to the phosphopanthetheine moiety. Is also involved in the synthesis of the antifungal antibiotic dihydroaeruginoic acid (Dha or hydroxyphenyl-thiazolinyl-carboxylate), a precursor of pyochelin. The protein is Pyochelin synthase PchD of Pseudomonas aeruginosa (strain UCBPP-PA14).